Here is a 635-residue protein sequence, read N- to C-terminus: Threonine--tRNA ligase (635 aa).

The TGS domain maps to 1 to 61; sequence MINISFPDGS…ENDCKLRILT (61 aa). The catalytic stretch occupies residues 242–533; that stretch reads DHRKLGKELD…LIEEYAGCFP (292 aa). Positions 333, 384, and 510 each coordinate Zn(2+).

It belongs to the class-II aminoacyl-tRNA synthetase family. In terms of assembly, homodimer. The cofactor is Zn(2+).

It localises to the cytoplasm. It carries out the reaction tRNA(Thr) + L-threonine + ATP = L-threonyl-tRNA(Thr) + AMP + diphosphate + H(+). In terms of biological role, catalyzes the attachment of threonine to tRNA(Thr) in a two-step reaction: L-threonine is first activated by ATP to form Thr-AMP and then transferred to the acceptor end of tRNA(Thr). Also edits incorrectly charged L-seryl-tRNA(Thr). This chain is Threonine--tRNA ligase, found in Rickettsia akari (strain Hartford).